Consider the following 339-residue polypeptide: MVREEITGSTQKLEWKCVESRVDSKRLYYGRFILSPLRKGQADTVGIALRRALLGEIEGTCITRAKFGNVPHEYSTIVGIEESIQEILLNLKEIVLRSNLYGVRDASICVKGPRYITAQDIILPPSVEIVDTAQPIANLREPIDFCIELQIKRDRGYHTELRKNSQDGSYPIDAVFMPVRNVNYSIFSCGNGNEKHEILFLEIWTNGSLTPKEALYEASRNLIDLFLPFIHTEEEGTSFEESKNRLTPPLLTFQKRFTNLKKNKKGIPLNCIFIDQLELPSRTYNCLKRANIHTLLDLLSKTEEDLMRINSFRMEDGKLIWDTLEKHLPIDLPKNKFSL.

Residues 1-233 (MVREEITGST…DLFLPFIHTE (233 aa)) form an alpha N-terminal domain (alpha-NTD) region. An alpha C-terminal domain (alpha-CTD) region spans residues 266–339 (GIPLNCIFID…IDLPKNKFSL (74 aa)).

This sequence belongs to the RNA polymerase alpha chain family. As to quaternary structure, in plastids the minimal PEP RNA polymerase catalytic core is composed of four subunits: alpha, beta, beta', and beta''. When a (nuclear-encoded) sigma factor is associated with the core the holoenzyme is formed, which can initiate transcription.

The protein resides in the plastid. The protein localises to the chloroplast. It catalyses the reaction RNA(n) + a ribonucleoside 5'-triphosphate = RNA(n+1) + diphosphate. Functionally, DNA-dependent RNA polymerase catalyzes the transcription of DNA into RNA using the four ribonucleoside triphosphates as substrates. The chain is DNA-directed RNA polymerase subunit alpha from Sorghum bicolor (Sorghum).